The following is a 109-amino-acid chain: Nucleoid-associated protein Swoo_1794 (109 aa).

The tract at residues 88–109 (QKDKMAEVTGGMQLPPGMKMPF) is disordered.

This sequence belongs to the YbaB/EbfC family. As to quaternary structure, homodimer.

Its subcellular location is the cytoplasm. The protein resides in the nucleoid. Binds to DNA and alters its conformation. May be involved in regulation of gene expression, nucleoid organization and DNA protection. In Shewanella woodyi (strain ATCC 51908 / MS32), this protein is Nucleoid-associated protein Swoo_1794.